The chain runs to 153 residues: Transcriptional repressor NrdR (153 aa).

A zinc finger lies at C3–C34. In terms of domain architecture, ATP-cone spans L49–V139.

Belongs to the NrdR family. It depends on Zn(2+) as a cofactor.

Negatively regulates transcription of bacterial ribonucleotide reductase nrd genes and operons by binding to NrdR-boxes. The polypeptide is Transcriptional repressor NrdR (Bacillus mycoides (strain KBAB4) (Bacillus weihenstephanensis)).